The sequence spans 424 residues: Hemagglutinin-esterase (424 aa).

The signal sequence occupies residues 1 to 16; it reads MFLLPRFVLVSCIIGS. Residues 7-127 are esterase domain 1; that stretch reads FVLVSCIIGS…SNDIWMQNKG (121 aa). The Virion surface portion of the chain corresponds to 17–392; sequence LGFDNPPTNV…PICVYDPLPL (376 aa). Ser40 serves as the catalytic Nucleophile. A disulfide bridge links Cys44 with Cys65. 5 N-linked (GlcNAc...) asparagine; by host glycosylation sites follow: Asn54, Asn89, Asn153, Asn236, and Asn301. Cystine bridges form between Cys113-Cys162, Cys197-Cys276, and Cys205-Cys249. Positions 128–266 are receptor binding; the sequence is LFYTQVYKNM…GNYLAISNEL (139 aa). The esterase domain 2 stretch occupies residues 267–379; that stretch reads LLTVPTKAIC…RCPTAADINN (113 aa). Cys307 and Cys312 form a disulfide bridge. Residue Asn316 is glycosylated (N-linked (GlcNAc...) asparagine; by host). Catalysis depends on charge relay system residues Asp326 and His329. Cysteines 347 and 371 form a disulfide. The N-linked (GlcNAc...) asparagine; by host glycan is linked to Asn358. The chain crosses the membrane as a helical span at residues 393-413; that stretch reads ILLGILLGVAVIIIVVLLLYF. Residues 414–424 lie on the Intravirion side of the membrane; that stretch reads MVDNGTRLHDA. A glycan (N-linked (GlcNAc...) asparagine; by host) is linked at Asn417.

The protein belongs to the influenza type C/coronaviruses hemagglutinin-esterase family. As to quaternary structure, homodimer; disulfide-linked. Forms a complex with the M protein in the pre-Golgi. Associates then with S-M complex to form a ternary complex S-M-HE. In terms of processing, N-glycosylated in the host RER.

The protein resides in the virion membrane. It localises to the host cell membrane. It catalyses the reaction N-acetyl-9-O-acetylneuraminate + H2O = N-acetylneuraminate + acetate + H(+). The enzyme catalyses N-acetyl-4-O-acetylneuraminate + H2O = N-acetylneuraminate + acetate + H(+). In terms of biological role, structural protein that makes short spikes at the surface of the virus. Contains receptor binding and receptor-destroying activities. Mediates de-O-acetylation of N-acetyl-4-O-acetylneuraminic acid, which is probably the receptor determinant recognized by the virus on the surface of erythrocytes and susceptible cells. This receptor-destroying activity is important for virus release as it probably helps preventing self-aggregation and ensures the efficient spread of the progeny virus from cell to cell. May serve as a secondary viral attachment protein for initiating infection, the spike protein being the major one. May become a target for both the humoral and the cellular branches of the immune system. The polypeptide is Hemagglutinin-esterase (Bovine coronavirus (strain LY-138) (BCoV)).